The chain runs to 339 residues: Serpentine receptor class alpha-20 (339 aa).

A run of 6 helical transmembrane segments spans residues 30–50 (VSFVFLATVILLSYYFAVLAI), 113–132 (LYFYYLTNYFSTYSVFSLTF), 151–171 (VSISLLIIQLVFTLGTYYFGL), 199–219 (FRTTIMVFCIIVTIFIYYLNV), 249–269 (CILIVLQFVCISVSSFGVNYI), and 284–304 (IAPFVVGVTYANLCLPLVIYF).

The protein belongs to the nematode receptor-like protein sra family.

It localises to the membrane. The polypeptide is Serpentine receptor class alpha-20 (sra-20) (Caenorhabditis elegans).